We begin with the raw amino-acid sequence, 75 residues long: Endogenous retrovirus group K member 5 Np9 protein (75 aa).

The tract at residues 22 to 43 (TAPKRQRPSRTGHDDDGGFVEK) is disordered. The segment covering 32–43 (TGHDDDGGFVEK) has biased composition (basic and acidic residues).

The protein localises to the nucleus. Its function is as follows. May possess a function in tumorigenesis. The chain is Endogenous retrovirus group K member 5 Np9 protein (ERVK-5) from Homo sapiens (Human).